The chain runs to 213 residues: Ras-related protein Rab-39B (213 aa).

GTP is bound by residues serine 17, glycine 20, lysine 21, serine 22, cysteine 23, serine 37, and threonine 40. Serine 22 contributes to the Mg(2+) binding site. The switch-I stretch occupies residues 35-43; that stretch reads QVSDPTVGV. Threonine 40 and aspartate 64 together coordinate Mg(2+). Positions 67, 123, 124, 126, 154, and 155 each coordinate GTP. The switch-II stretch occupies residues 67-83; the sequence is GQERFRSITRAYYRNSV. Serine 201 carries the phosphoserine modification. 2 S-geranylgeranyl cysteine lipidation sites follow: cysteine 211 and cysteine 213. A Cysteine methyl ester modification is found at cysteine 213.

Belongs to the small GTPase superfamily. Rab family. Interacts (GDP-bound) with C9orf72; C9orf72 in complex with SMCR8 acts as a GEF for RAB39B. Interacts (in GTP-bound form) with PICK1 (via PDZ domain); a PICK1 homodimer may allow simultaneous association of RAB39B and GRIA2 to PICK1 which is involved in GRIA2 trafficking. Interacts with isoform c of RASSF1; the interaction is strong. Interacts with isoform a of RASSF1; the interaction is weak. Interacts with the DLG4/PSD-95. Interacts (GTP-bound) with HOPS complex components VPS39 and VPS41. It depends on Mg(2+) as a cofactor.

The protein localises to the cell membrane. Its subcellular location is the cytoplasmic vesicle membrane. The protein resides in the golgi apparatus. It is found in the cytoplasmic vesicle. It localises to the autophagosome membrane. The protein localises to the autolysosome membrane. It carries out the reaction GTP + H2O = GDP + phosphate + H(+). Regulated by guanine nucleotide exchange factors (GEFs) including C9orf72-SMCR8 complex, which promote the exchange of bound GDP for free GTP. Regulated by GTPase activating proteins (GAPs) which increase the GTP hydrolysis activity. Inhibited by GDP dissociation inhibitors (GDIs). Functionally, the small GTPases Rab are key regulators of intracellular membrane trafficking, from the formation of transport vesicles to their fusion with membranes. Rabs cycle between an inactive GDP-bound form and an active GTP-bound form that is able to recruit to membranes different sets of downstream effectors directly responsible for vesicle formation, movement, tethering and fusion. RAB39B is involved in autophagy and may function in autophagosome formation. Binds downstream effector PICK1 to ensure selectively GRIA2 exit from the endoplasmic reticulum to the Golgi and to regulate AMPAR composition at the post-synapses and thus synaptic transmission. May regulate the homeostasis of SNCA/alpha-synuclein. This chain is Ras-related protein Rab-39B (RAB39B), found in Bos taurus (Bovine).